The following is a 341-amino-acid chain: Heat-inducible transcription repressor HrcA (341 aa).

The protein belongs to the HrcA family.

Its function is as follows. Negative regulator of class I heat shock genes (grpE-dnaK-dnaJ and groELS operons). Prevents heat-shock induction of these operons. The protein is Heat-inducible transcription repressor HrcA of Symbiobacterium thermophilum (strain DSM 24528 / JCM 14929 / IAM 14863 / T).